We begin with the raw amino-acid sequence, 35 residues long: RSCIDTIPKSRCTAFQCKHSMKYRLSFCRKTCGTC.

Positions 3–35 (CIDTIPKSRCTAFQCKHSMKYRLSFCRKTCGTC) constitute a ShKT domain. Intrachain disulfides connect C3–C35, C12–C28, and C17–C32.

The protein belongs to the sea anemone type 1 potassium channel toxin family. Type 1a subfamily.

The protein resides in the secreted. The protein localises to the nematocyst. In terms of biological role, peptide with both antimicrobial and neurotoxin activities. Inhibits voltage-dependent potassium channels. Potently blocks Kv1.1/KCNA1 (IC(50)=6.7-87 pM) and Kv1.3/KCNA3 (IC(50)=10-250 pM). Less potently blocks Kv1.4/KCNA4 (IC(50)=0.31 nM), and Kv1.6/KCNA6 (IC(50)=0.16 nM). Shows moderate activity on Kv1.2/KCNA2 (IC(50)=9 nM), Kv1.7/KCNA7 (IC(50)=11.5 nM), and KCa3.1/KCNN4 (Kd=0.03-30 nM). Blocks Kv channels by binding to a shallow vestibule at the outer entrance to the ion conduction pathway and occluding the entrance to the pore. Shows antibacterial activity against all tested bacteria (the Gram-positive bacteria B.subtilis and S.aureus, and the Gram-negative bacteria S.typhimurium and P.aeruginosa). In Stichodactyla helianthus (Sun anemone), this protein is Kappa-stichotoxin-She3a.